The primary structure comprises 453 residues: UDP-N-acetylmuramoylalanine--D-glutamate ligase (453 aa).

Position 115-121 (115-121) interacts with ATP; that stretch reads GTNGKTT.

It belongs to the MurCDEF family.

It is found in the cytoplasm. The enzyme catalyses UDP-N-acetyl-alpha-D-muramoyl-L-alanine + D-glutamate + ATP = UDP-N-acetyl-alpha-D-muramoyl-L-alanyl-D-glutamate + ADP + phosphate + H(+). It functions in the pathway cell wall biogenesis; peptidoglycan biosynthesis. Functionally, cell wall formation. Catalyzes the addition of glutamate to the nucleotide precursor UDP-N-acetylmuramoyl-L-alanine (UMA). The sequence is that of UDP-N-acetylmuramoylalanine--D-glutamate ligase from Geotalea daltonii (strain DSM 22248 / JCM 15807 / FRC-32) (Geobacter daltonii).